A 337-amino-acid polypeptide reads, in one-letter code: tRNA N6-adenosine threonylcarbamoyltransferase (337 aa).

His111 and His115 together coordinate Fe cation. Substrate is bound by residues 134–138, Asp167, Gly180, and Asn272; that span reads LVSGG. Asp300 lines the Fe cation pocket.

This sequence belongs to the KAE1 / TsaD family. Requires Fe(2+) as cofactor.

Its subcellular location is the cytoplasm. The catalysed reaction is L-threonylcarbamoyladenylate + adenosine(37) in tRNA = N(6)-L-threonylcarbamoyladenosine(37) in tRNA + AMP + H(+). Functionally, required for the formation of a threonylcarbamoyl group on adenosine at position 37 (t(6)A37) in tRNAs that read codons beginning with adenine. Is involved in the transfer of the threonylcarbamoyl moiety of threonylcarbamoyl-AMP (TC-AMP) to the N6 group of A37, together with TsaE and TsaB. TsaD likely plays a direct catalytic role in this reaction. In Escherichia coli O157:H7, this protein is tRNA N6-adenosine threonylcarbamoyltransferase.